Consider the following 409-residue polypeptide: FAD-dependent monooxygenase phnB (409 aa).

Positions 35, 50, 110, and 311 each coordinate FAD.

Belongs to the paxM FAD-dependent monooxygenase family. It depends on FAD as a cofactor.

The enzyme catalyses 3,6,7,9-tetrahydroxy-3-methyl-2,3-dihydro-1H-naphtho[2,1-b]pyran-1-one + NADPH + O2 + H(+) = 2,3,4,7,9-pentahydroxy-6-methyl-1H-phenalen-1-one + NADP(+) + 2 H2O. It participates in secondary metabolite biosynthesis. FAD-dependent monooxygenase; part of the gene cluster that mediates the biosynthesis of phenalenones such as herqueinone, compounds that have been reported to treat tumors, bacterial infections and/or mycoses, and rheumatic diseases. The non-reducing polyketide synthase phnA synthesizes the heptaketide backbone and cyclizes it into the angular, hemiketal-containing naphtho-gamma-pyrone prephenalenone. The product template (PT) domain of phnA catalyzes only the C4-C9 aldol condensation, which is unprecedented among known PT domains. The transformation of prephenalenone to phenalenones requires an FAD-dependent monooxygenase phnB, which catalyzes the C2 aromatic hydroxylation of prephenalenone and ring opening of the gamma-pyrone ring simultaneously. Subsequent intramolecular deprotonation of C3 phenolic oxygen accelerates phenalenone ring closure to yield the tricyclic phenalenone core with a C2 hydroxylation. The prenyltransferase phnF further catalyzes reverse C-prenylation of phenalenone by direct electrophilic substitution at C6, or possibly via first a forward O-prenylation of a neighboring phenol in phenalenone, followed by a Claisen rearrangement. The hydroalkoxylation enzyme phnH catalyzes the 5-exo-trig cyclization via acid catalysis after the spontaneous deprotonation of 7-OH, which leads to the formation of the dihydrobenzofuran atrovenetin. Atrovenetin is further converted to deoxyherqueinone by the O-methyltransferase phnC which can methylate C2-OH to stabilize the northern portion of the phenalenone core. Finally, the oxidoreductase phnG converts deoxyherqueinone to herqueinone via C6 hydroxylation. This Penicillium herquei protein is FAD-dependent monooxygenase phnB.